A 529-amino-acid polypeptide reads, in one-letter code: Potassium voltage-gated channel subfamily A member 6 (529 aa).

Residues 1 to 33 (MRSEKSLTLAAPGEVRGPEGEQQDAGDFPEAGG) are disordered. The Cytoplasmic portion of the chain corresponds to 1 to 171 (MRSEKSLTLA…LLFEYPESSG (171 aa)). Phosphoserine is present on Ser-3. A helical membrane pass occupies residues 172–193 (PARGIAIVSVLVILISIVIFCL). Residues 194 to 262 (ETLPQFRVDG…TLGGSFFTDP (69 aa)) are Extracellular-facing. A compositionally biased stretch (low complexity) spans 210-220 (GVSRVSPVSRG). Residues 210–233 (GVSRVSPVSRGSQEEEEDEDDSYT) are disordered. The chain crosses the membrane as a helical span at residues 263–284 (FFLVETLCIVWFTFELLVRFSA). A lipid anchor (S-palmitoyl cysteine) is attached at Cys-285. The Cytoplasmic portion of the chain corresponds to 285 to 295 (CPSKPAFFRNI). A helical transmembrane segment spans residues 296-316 (MNIIDLVAIFPYFITLGTELV). Over 317–337 (QQQEQQPASGGGGQNGQQAMS) the chain is Extracellular. Residues 338 to 358 (LAILRVIRLVRVFRIFKLSRH) traverse the membrane as a helical; Voltage-sensor segment. At 359 to 373 (SKGLQILGKTLQASM) the chain is on the cytoplasmic side. Residues 360 to 373 (KGLQILGKTLQASM) form an S4-S5 linker region. Residues 374–395 (RELGLLIFFLFIGVILFSSAVY) form a helical membrane-spanning segment. The Extracellular segment spans residues 396–409 (FAEADDDDSLFPSI). The segment at residues 410-421 (PDAFWWAVVTMT) is an intramembrane region (helical). The short motif at 422–427 (TVGYGD) is the Selectivity filter element. Residues 422 to 429 (TVGYGDMY) lie within the membrane without spanning it. At 430 to 436 (PMTVGGK) the chain is on the extracellular side. The helical transmembrane segment at 437 to 465 (IVGSLCAIAGVLTIALPVPVIVSNFNYFY) threads the bilayer. At 466 to 529 (HRETEQEEQG…YAEKRMLTEV (64 aa)) the chain is on the cytoplasmic side. Residues 488–513 (DLRATDNGLGKPDFPEANRERRPSYL) are disordered. Residues 500–510 (DFPEANRERRP) show a composition bias toward basic and acidic residues. Position 511 is a phosphoserine; by PKA (Ser-511). Positions 527–529 (TEV) match the PDZ-binding motif.

This sequence belongs to the potassium channel family. A (Shaker) (TC 1.A.1.2) subfamily. Kv1.6/KCNA6 sub-subfamily. As to quaternary structure, homotetramer and heterotetramer of potassium channel proteins. Interacts with KCNAB1 and KCNAB2.

It localises to the cell membrane. The enzyme catalyses K(+)(in) = K(+)(out). In terms of biological role, voltage-gated potassium channel that mediates transmembrane potassium transport in excitable membranes. Forms tetrameric potassium-selective channels through which potassium ions pass in accordance with their electrochemical gradient. The channel alternates between opened and closed conformations in response to the voltage difference across the membrane. Can form functional homotetrameric channels and heterotetrameric channels that contain variable proportions of KCNA1, KCNA2, KCNA4, KCNA6, and possibly other family members as well; channel properties depend on the type of alpha subunits that are part of the channel. Channel properties are modulated by cytoplasmic beta subunits that regulate the subcellular location of the alpha subunits and promote rapid inactivation. Homotetrameric channels display rapid activation and slow inactivation. This Homo sapiens (Human) protein is Potassium voltage-gated channel subfamily A member 6 (KCNA6).